A 628-amino-acid polypeptide reads, in one-letter code: ATP-dependent zinc metalloprotease FtsH 4 (628 aa).

Topologically, residues 1–14 (MAIKPQPQWQRRLA) are cytoplasmic. The chain crosses the membrane as a helical span at residues 15–35 (SVLLWGSTIYLLVNLLAPALF). The Lumenal portion of the chain corresponds to 36–119 (RSQPPQVPYS…AAAPPAKNSW (84 aa)). The helical transmembrane segment at 120-140 (FGTLLSWVIPPLIFVGIWSFF) threads the bilayer. The Cytoplasmic portion of the chain corresponds to 141-628 (LNRNNNGAPG…QVQAPGTLVV (488 aa)). 214–221 (GPPGTGKT) contacts ATP. His-438 provides a ligand contact to Zn(2+). The active site involves Glu-439. Residues His-442 and Asp-515 each coordinate Zn(2+).

It in the central section; belongs to the AAA ATPase family. The protein in the C-terminal section; belongs to the peptidase M41 family. Homohexamer. It depends on Zn(2+) as a cofactor.

The protein localises to the cellular thylakoid membrane. Its function is as follows. Acts as a processive, ATP-dependent zinc metallopeptidase for both cytoplasmic and membrane proteins. Plays a role in the quality control of integral membrane proteins. The polypeptide is ATP-dependent zinc metalloprotease FtsH 4 (Synechocystis sp. (strain ATCC 27184 / PCC 6803 / Kazusa)).